Reading from the N-terminus, the 104-residue chain is Urease subunit beta (104 aa).

Belongs to the urease beta subunit family. As to quaternary structure, heterotrimer of UreA (gamma), UreB (beta) and UreC (alpha) subunits. Three heterotrimers associate to form the active enzyme.

It localises to the cytoplasm. It catalyses the reaction urea + 2 H2O + H(+) = hydrogencarbonate + 2 NH4(+). Its pathway is nitrogen metabolism; urea degradation; CO(2) and NH(3) from urea (urease route): step 1/1. The sequence is that of Urease subunit beta from Methylocella silvestris (strain DSM 15510 / CIP 108128 / LMG 27833 / NCIMB 13906 / BL2).